Reading from the N-terminus, the 154-residue chain is General odorant-binding protein 83a (154 aa).

The first 33 residues, 1–33 (MALNGFGRRVSASVLLIALSLLSGALILPPAAA), serve as a signal peptide directing secretion. Disulfide bonds link Cys-55–Cys-86, Cys-82–Cys-133, and Cys-124–Cys-142.

Belongs to the PBP/GOBP family. In terms of tissue distribution, in the ventrolateral region of the antenna, expressed in two distinct types of olfactory hairs: in most sensilla trichodea and in a subset of the small sensilla basiconica (at protein level).

The protein localises to the secreted. This Drosophila melanogaster (Fruit fly) protein is General odorant-binding protein 83a (Obp83a).